Reading from the N-terminus, the 205-residue chain is LexA repressor (205 aa).

The segment at residues 28–48 (RAEIAKRLGFKSANAAEEHLK) is a DNA-binding region (H-T-H motif). Residues Ser122 and Lys159 each act as for autocatalytic cleavage activity in the active site.

It belongs to the peptidase S24 family. In terms of assembly, homodimer.

The catalysed reaction is Hydrolysis of Ala-|-Gly bond in repressor LexA.. In terms of biological role, represses a number of genes involved in the response to DNA damage (SOS response), including recA and lexA. In the presence of single-stranded DNA, RecA interacts with LexA causing an autocatalytic cleavage which disrupts the DNA-binding part of LexA, leading to derepression of the SOS regulon and eventually DNA repair. This is LexA repressor from Shewanella woodyi (strain ATCC 51908 / MS32).